Here is a 404-residue protein sequence, read N- to C-terminus: Zinc metalloprotease Rip1 (404 aa).

A helical transmembrane segment spans residues 1-21 (MMFVTGIVLFALAILISVALH). His21 serves as a coordination point for Zn(2+). Glu22 is an active-site residue. Position 25 (His25) interacts with Zn(2+). Residues 104–124 (PGMNLAICLVLIYAIALVWGL) form a helical membrane-spanning segment. A PDZ domain is found at 121–203 (VWGLPNLHPP…SVPIVVERDG (83 aa)). Asp202 provides a ligand contact to Zn(2+). 2 helical membrane-spanning segments follow: residues 313 to 333 (LWVA…TINL) and 373 to 393 (LLPA…LTVT).

This sequence belongs to the peptidase M50B family. Zn(2+) serves as cofactor.

It localises to the cell membrane. In terms of biological role, a probable intramembrane site-2 protease (S2P) that cleaves type-2 transmembrane proteins within their membrane-spanning domains. Cleaves PbpB (PBP3, FtsI); cleavage is inhibited by Wag31-PbpB interaction. Probably also cleaves anti-sigma factors RskA, RslA and RsmA. Its function is as follows. Regulated intramembrane proteolysis (RIP) occurs when an extracytoplasmic signal (possibly oxidative stress) triggers a concerted proteolytic cascade to transmit information and elicit cellular responses. The membrane-spanning regulatory substrate protein (includes anti-sigma factors RskA, RslA, RsmA, and PbpB in M.tuberculosis) is first cut extracytoplasmically (site-1 protease, S1P), then within the membrane itself (site-2 protease, S2P, this entry), while cytoplasmic proteases finish degrading the regulatory protein, liberating the effector protein (ECF sigma factors SigK, SigL and SigM). In Mycobacterium bovis (strain BCG / Pasteur 1173P2), this protein is Zinc metalloprotease Rip1 (rip1).